Consider the following 392-residue polypeptide: 8-amino-7-oxononanoate synthase (392 aa).

Position 19 (R19) interacts with substrate. 106–107 contributes to the pyridoxal 5'-phosphate binding site; it reads GY. H131 lines the substrate pocket. S176, H204, and T233 together coordinate pyridoxal 5'-phosphate. K236 carries the post-translational modification N6-(pyridoxal phosphate)lysine. T350 lines the substrate pocket.

This sequence belongs to the class-II pyridoxal-phosphate-dependent aminotransferase family. BioF subfamily. As to quaternary structure, homodimer. Requires pyridoxal 5'-phosphate as cofactor.

It carries out the reaction 6-carboxyhexanoyl-[ACP] + L-alanine + H(+) = (8S)-8-amino-7-oxononanoate + holo-[ACP] + CO2. Its pathway is cofactor biosynthesis; biotin biosynthesis. Catalyzes the decarboxylative condensation of pimeloyl-[acyl-carrier protein] and L-alanine to produce 8-amino-7-oxononanoate (AON), [acyl-carrier protein], and carbon dioxide. This Pseudomonas fluorescens (strain ATCC BAA-477 / NRRL B-23932 / Pf-5) protein is 8-amino-7-oxononanoate synthase.